A 273-amino-acid chain; its full sequence is DnaJ homolog subfamily C member 27-A (273 aa).

GTP-binding positions include 23–30, 71–75, and 134–137; these read GNAEVGKS, DMAGH, and NKID. The J domain maps to 217-273; that stretch reads DSWDMLGVKPGATRDEVNKAYRKLAVLLHPDKCMAPGSEDAFKAVVNARTALLKNIK.

Belongs to the small GTPase superfamily. Rab family.

It is found in the nucleus. Its function is as follows. GTPase possibly involved in regulation of the MEK/ERK pathway. In Xenopus laevis (African clawed frog), this protein is DnaJ homolog subfamily C member 27-A (dnajc27-a).